Consider the following 506-residue polypeptide: Maturase K (506 aa).

The protein belongs to the intron maturase 2 family. MatK subfamily.

It localises to the plastid. The protein resides in the chloroplast. In terms of biological role, usually encoded in the trnK tRNA gene intron. Probably assists in splicing its own and other chloroplast group II introns. This is Maturase K from Andromeda polifolia (Bog rosemary).